The chain runs to 114 residues: uncharacterized protein (114 aa).

Residues 1–19 (MKASYLVLIFISIFSMAQA) form the signal peptide. Serine 41 is modified (phosphoserine).

The protein belongs to the protease inhibitor I9 family.

This is an uncharacterized protein from Saccharomyces cerevisiae (strain ATCC 204508 / S288c) (Baker's yeast).